We begin with the raw amino-acid sequence, 513 residues long: MQLNSTEISELIKQRIVEFDLTSIIYNEGIILSVIDGIIRIHGLSEVMQGEMIALPGNSFAIALNLERDEVGAVVMGPYSHLTEGMKVKCTGRILEVPVGHSLLGRIVNTLGIPIDGKGKLENKLFSPIETNAPNVIERQSISEPIQTGYKSIDAMIPIGRGQRELIIGDRQTGKSTLAIDTIINQRNSDIKCIYVAIGQKASTINNVVQKLEEHNALINTIIVTATASDSVALQYLAPYAGCVMGEYFRNIGENALVIYDDLSKQAIAYRQISLLLRRPPGREAYPGDIFYLHSRLLERAARVSANYVETYTKGKIKGKTGSLTALPIIETQAGDVSSFIPTNVISITDGQIFLESSLFNAGIRPAVNPGISVSRVGSAAQTKIIKTVSSGIRTTLAQYRELEAFSQFASDLDEVTRKQINYGKKVTELLKQKQHMPMSVSQQALVLFAAEQGYLEDINLKKINDFETQLLLYVKHQYHDFMKIIDQEGNYNDDIEKTLTEIISKFKTNASF.

Residue 169 to 176 coordinates ATP; sequence GDRQTGKS.

It belongs to the ATPase alpha/beta chains family. F-type ATPases have 2 components, CF(1) - the catalytic core - and CF(0) - the membrane proton channel. CF(1) has five subunits: alpha(3), beta(3), gamma(1), delta(1), epsilon(1). CF(0) has three main subunits: a(1), b(2) and c(9-12). The alpha and beta chains form an alternating ring which encloses part of the gamma chain. CF(1) is attached to CF(0) by a central stalk formed by the gamma and epsilon chains, while a peripheral stalk is formed by the delta and b chains.

It is found in the cell membrane. It carries out the reaction ATP + H2O + 4 H(+)(in) = ADP + phosphate + 5 H(+)(out). Its function is as follows. Produces ATP from ADP in the presence of a proton gradient across the membrane. The alpha chain is a regulatory subunit. This is ATP synthase subunit alpha from Baumannia cicadellinicola subsp. Homalodisca coagulata.